The primary structure comprises 349 residues: Inhibitor of nuclear factor kappa-B kinase-interacting protein (349 aa).

Positions 1 to 11 (MSEVKSRKKSG) are enriched in basic residues. The segment at 1 to 39 (MSEVKSRKKSGTKGAPAEPGKRNEGGKSPEARGGGGRGW) is disordered. Positions 19 to 30 (PGKRNEGGKSPE) are enriched in basic and acidic residues. Residues 45-61 (GVSLLSLGTCLGLAWFV) form a helical membrane-spanning segment. An N-linked (GlcNAc...) asparagine glycan is attached at Asn145. 2 coiled-coil regions span residues 183-216 (GLVT…IGDL) and 304-347 (IGRL…HISD). A glycan (N-linked (GlcNAc...) asparagine) is linked at Asn327.

N-glycosylated.

Its subcellular location is the endoplasmic reticulum membrane. In terms of biological role, target of p53/TP53 with pro-apoptotic function. In Bos taurus (Bovine), this protein is Inhibitor of nuclear factor kappa-B kinase-interacting protein (IKBIP).